The sequence spans 116 residues: uncharacterized protein (116 aa).

Residues 2-73 (DGSVGTGRQV…PKALICGHRD (72 aa)) enclose the N-acetylmuramoyl-L-alanine amidase domain.

It to phage T3 and T7 N-acetylmuramoyl-L-alanine amidases.

This is an uncharacterized protein from Haemophilus influenzae (strain ATCC 51907 / DSM 11121 / KW20 / Rd).